The primary structure comprises 515 residues: Zinc-binding protein AdcA (515 aa).

Positions 1–28 (MKKKILLMMSLISVFFAWQLTQAKQVLA) are cleaved as a signal peptide. His-66 contributes to the Zn(2+) binding site. The disordered stretch occupies residues 126–148 (HHHEEADKKHEHNKHSEEGHNHA). A his-rich loop region spans residues 129–148 (EEADKKHEHNKHSEEGHNHA). Zn(2+) is bound by residues His-152, His-216, and Glu-291.

It belongs to the bacterial solute-binding protein 9 family.

In terms of biological role, part of the ATP-binding cassette (ABC) transport system AdcABC involved in zinc import. Binds zinc with high affinity and specificity and delivers it to the membrane permease for translocation into the cytoplasm. This chain is Zinc-binding protein AdcA (adcA), found in Streptococcus pyogenes serotype M3 (strain ATCC BAA-595 / MGAS315).